The sequence spans 103 residues: Small ribosomal subunit protein uS10 (103 aa).

Belongs to the universal ribosomal protein uS10 family. In terms of assembly, part of the 30S ribosomal subunit.

Functionally, involved in the binding of tRNA to the ribosomes. The sequence is that of Small ribosomal subunit protein uS10 from Alteromonas mediterranea (strain DSM 17117 / CIP 110805 / LMG 28347 / Deep ecotype).